Consider the following 215-residue polypeptide: Probable phosphoglycerate mutase GpmB (215 aa).

Substrate-binding positions include 8 to 15 (RHGETQWN), 21 to 22 (QG), Arg-58, Lys-60, 82 to 85 (ELDM), 104 to 105 (RR), and 151 to 152 (GI). His-9 acts as the Tele-phosphohistidine intermediate in catalysis. Glu-82 functions as the Proton donor/acceptor in the catalytic mechanism.

The protein belongs to the phosphoglycerate mutase family. GpmB subfamily.

The enzyme catalyses (2R)-2-phosphoglycerate = (2R)-3-phosphoglycerate. It functions in the pathway carbohydrate degradation; glycolysis; pyruvate from D-glyceraldehyde 3-phosphate: step 3/5. The polypeptide is Probable phosphoglycerate mutase GpmB (Salmonella arizonae (strain ATCC BAA-731 / CDC346-86 / RSK2980)).